The chain runs to 142 residues: Snaclec GPIB-binding protein subunit alpha (142 aa).

Intrachain disulfides connect cysteine 6-cysteine 17, cysteine 39-cysteine 136, and cysteine 111-cysteine 128. The region spanning 13 to 137 is the C-type lectin domain; sequence HRQYCYKFFQ…CVEGNPFVCK (125 aa).

This sequence belongs to the snaclec family. Heterodimer of subunits alpha and beta; disulfide-linked. Expressed by the venom gland.

The protein resides in the secreted. Binds to platelet GPIb (subunit alpha) (GP1BA) and functions as a receptor blocker for vWF binding to GPIb. The platelet GPIb-binding site resides on the GPIB-BP subunit beta and not on the alpha subunit. At a final concentration of 104 nM totally abolishes vWF-dependent shear-induced platelet aggregation (SIPA) at a high shear stress, but had no effect on SIPA at a low shear stress. The protein is Snaclec GPIB-binding protein subunit alpha of Bothrops jararaca (Jararaca).